Reading from the N-terminus, the 72-residue chain is DNA-directed RNA polymerase subunit omega (72 aa).

The protein belongs to the RNA polymerase subunit omega family. In terms of assembly, the RNAP catalytic core consists of 2 alpha, 1 beta, 1 beta' and 1 omega subunit. When a sigma factor is associated with the core the holoenzyme is formed, which can initiate transcription.

It carries out the reaction RNA(n) + a ribonucleoside 5'-triphosphate = RNA(n+1) + diphosphate. Promotes RNA polymerase assembly. Latches the N- and C-terminal regions of the beta' subunit thereby facilitating its interaction with the beta and alpha subunits. In Limosilactobacillus reuteri (strain DSM 20016) (Lactobacillus reuteri), this protein is DNA-directed RNA polymerase subunit omega.